The chain runs to 170 residues: Thialysine N-epsilon-acetyltransferase (170 aa).

Residues threonine 4–glutamate 166 form the N-acetyltransferase domain. Phenylalanine 27–glutamate 28 provides a ligand contact to substrate. Lysine 29 bears the N6-acetyllysine mark. Position 92 (glutamate 92) interacts with substrate. Acetyl-CoA is bound by residues isoleucine 94–valine 96, glycine 102–threonine 107, asparagine 133–lysine 135, and tyrosine 140. Tyrosine 140 serves as the catalytic Proton donor. Residue glutamate 152 participates in substrate binding.

It belongs to the acetyltransferase family. Homodimer.

Its subcellular location is the cytoplasm. The catalysed reaction is S-(2-aminoethyl)-L-cysteine + acetyl-CoA = S-(2-acetamidoethyl)-L-cysteine + CoA + H(+). It carries out the reaction an alkane-alpha,omega-diamine + acetyl-CoA = an N-acetylalkane-alpha,omega-diamine + CoA + H(+). Its function is as follows. Catalyzes the N-acetylation of the amino acid thialysine (S-(2-aminoethyl)-L-cysteine), a L-lysine analog with the 4-methylene group substituted with a sulfur. May also catalyze acetylation of polyamines, such as norspermidine, spermidine or spermine. However, ability to acetylate polyamines is weak, suggesting that it does not act as a diamine acetyltransferase in vivo. The sequence is that of Thialysine N-epsilon-acetyltransferase from Mus musculus (Mouse).